The following is a 915-amino-acid chain: Coiled-coil domain-containing protein 57 (915 aa).

The centrosomal targeting domain stretch occupies residues 1 to 502; the sequence is MLPLGSEPAL…MHGLPRPGAQ (502 aa). Coiled coils occupy residues 92–173, 214–422, 456–483, and 521–548; these read VSEL…QRQE, LEAL…LERD, KSQV…VTLE, and IQRL…LSHQ. Disordered regions lie at residues 555 to 574, 606 to 653, and 724 to 915; these read TAAE…GDAA, PLKM…QAGP, and QHGG…NIMD. A microtubule binding domain region spans residues 606–915; that stretch reads PLKMSSPHAE…PKIRNYNIMD (310 aa). The span at 613-627 shows a compositional bias: polar residues; that stretch reads HAESQPSVRTSTETT. Positions 628 to 652 are enriched in low complexity; that stretch reads GGSAQAGQAGGSVQAGQAGGSVQAG. Residues 745–758 show a composition bias toward basic and acidic residues; the sequence is GREDAKSAEDEAPS. 3 stretches are compositionally biased toward polar residues: residues 781-794, 819-830, and 841-852; these read PKTQ…TCKS, SHSSSSFASGTL, and SSPSGVTSQGDS. The segment covering 879–891 has biased composition (low complexity); it reads KTAAQAKAKTTGA.

In terms of assembly, interacts with CEP63; the interaction is required for their location to proximal end of centrioles. Interacts with microtubules.

Its subcellular location is the cytoplasm. The protein localises to the cytoskeleton. The protein resides in the microtubule organizing center. It localises to the centrosome. It is found in the centriolar satellite. Its subcellular location is the centriole. The protein localises to the spindle. Its function is as follows. Pleiotropic regulator of centriole duplication, mitosis, and ciliogenesis. Critical interface between centrosome and microtubule-mediated cellular processes. Centriole duplication protein required for recruitment of CEP63, CEP152, and PLK4 to the centrosome. Independent of its centrosomal targeting, localizes to and interacts with microtubules and regulates microtubule nucleation, stability, and mitotic progression. The polypeptide is Coiled-coil domain-containing protein 57 (Homo sapiens (Human)).